Here is a 289-residue protein sequence, read N- to C-terminus: MSKNKLLLGSHVGFKAKNYLVGSVLETLEYDGNCFMVFTGPPQNFMRKELDQNLIDEAVKLMKEKNPLLLENIVVHAPYLINLGSPKESTRSLGLNQLIVEINRTNQIHSKLIVLHPGSALDSDRNVAINHIADNLNKAIEATDNDVIICVETMAGKGSEVGINFEEVSKIVSGVKNKKRIGVCLDTCHMHDSGIDISDPDQTLEEFSKYLDLSYIKVIHLNDSKNEIGSRKDRHDNIGYGKVGFDYLVKWAHNEKLANVPKILETPYRDDKPIYKQEIINLNSKEWKE.

Zn(2+) is bound by residues H76, H116, E152, D186, H189, H220, D233, H235, and E265.

This sequence belongs to the AP endonuclease 2 family. The cofactor is Zn(2+).

It carries out the reaction Endonucleolytic cleavage to 5'-phosphooligonucleotide end-products.. In terms of biological role, endonuclease IV plays a role in DNA repair. It cleaves phosphodiester bonds at apurinic or apyrimidinic (AP) sites, generating a 3'-hydroxyl group and a 5'-terminal sugar phosphate. This is Probable endonuclease 4 from Malacoplasma penetrans (strain HF-2) (Mycoplasma penetrans).